A 301-amino-acid polypeptide reads, in one-letter code: MAATPTHFSVSHDPFSSTSLLNLQTQAIFGPNHSLKTTQLRIPASFRRKATNLQVMASGKTPGLTQEANGVAIDRQNNTDVFDDMKQRFLAFKKLKYMDDFEHYKNLADAQAPKFLVIACADSRVCPSAVLGFQPGDAFTVRNIANLVPPYESGPTETKAALEFSVNTLNVENILVIGHSRCGGIQALMKMEDEGDSRSFIHNWVVVGKKAKESTKAVASNLHFDHQCQHCEKASINHSLERLLGYPWIEEKVRQGSLSLHGGYYNFVDCTFEKWTVDYAASRGKKKEGSGIAVKDRSVWS.

A chloroplast-targeting transit peptide spans 1-56 (MAATPTHFSVSHDPFSSTSLLNLQTQAIFGPNHSLKTTQLRIPASFRRKATNLQVM). Threonine 65 carries the post-translational modification Phosphothreonine. Serine 128 is modified (phosphoserine). Position 231 is an S-nitrosocysteine (cysteine 231).

This sequence belongs to the beta-class carbonic anhydrase family. Strongly expressed in aerial tissues including leaves, stems, flowers and siliques.

Its subcellular location is the plastid. It localises to the chloroplast. The enzyme catalyses hydrogencarbonate + H(+) = CO2 + H2O. In terms of biological role, reversible hydration of carbon dioxide. This Arabidopsis thaliana (Mouse-ear cress) protein is Beta carbonic anhydrase 5, chloroplastic (BCA5).